The following is a 605-amino-acid chain: UvrABC system protein C (605 aa).

The 78-residue stretch at Gly-15 to Ile-92 folds into the GIY-YIG domain. Residues Gly-197–Thr-232 enclose the UVR domain.

It belongs to the UvrC family. Interacts with UvrB in an incision complex.

It is found in the cytoplasm. In terms of biological role, the UvrABC repair system catalyzes the recognition and processing of DNA lesions. UvrC both incises the 5' and 3' sides of the lesion. The N-terminal half is responsible for the 3' incision and the C-terminal half is responsible for the 5' incision. The polypeptide is UvrABC system protein C (Levilactobacillus brevis (strain ATCC 367 / BCRC 12310 / CIP 105137 / JCM 1170 / LMG 11437 / NCIMB 947 / NCTC 947) (Lactobacillus brevis)).